The sequence spans 257 residues: Imidazole glycerol phosphate synthase subunit HisF (257 aa).

Active-site residues include D11 and D130.

It belongs to the HisA/HisF family. In terms of assembly, heterodimer of HisH and HisF.

Its subcellular location is the cytoplasm. The catalysed reaction is 5-[(5-phospho-1-deoxy-D-ribulos-1-ylimino)methylamino]-1-(5-phospho-beta-D-ribosyl)imidazole-4-carboxamide + L-glutamine = D-erythro-1-(imidazol-4-yl)glycerol 3-phosphate + 5-amino-1-(5-phospho-beta-D-ribosyl)imidazole-4-carboxamide + L-glutamate + H(+). It functions in the pathway amino-acid biosynthesis; L-histidine biosynthesis; L-histidine from 5-phospho-alpha-D-ribose 1-diphosphate: step 5/9. Its function is as follows. IGPS catalyzes the conversion of PRFAR and glutamine to IGP, AICAR and glutamate. The HisF subunit catalyzes the cyclization activity that produces IGP and AICAR from PRFAR using the ammonia provided by the HisH subunit. This is Imidazole glycerol phosphate synthase subunit HisF from Shewanella putrefaciens (strain CN-32 / ATCC BAA-453).